We begin with the raw amino-acid sequence, 148 residues long: UPF0756 membrane protein YeaL (148 aa).

4 helical membrane passes run 14–34 (ALGF…LIIV), 51–71 (LSIG…SGTL), 86–106 (LVAI…VTLM), and 121–141 (VLGV…AGLV).

The protein belongs to the UPF0756 family.

It localises to the cell membrane. In Shigella flexneri, this protein is UPF0756 membrane protein YeaL.